Reading from the N-terminus, the 153-residue chain is Calmodulin-like protein 4 (153 aa).

EF-hand domains are found at residues 8 to 43 (DAIQKFKECFSLYDKKGKGKIPAGDLLTVMRCLGTC), 44 to 79 (PTPGEVTRHLQVHKIGKDGEVDFSTFLTIMYRQQKQ), 81 to 116 (DPENEIMVAMLMSDKQKKGVIPLKELRAKLTQMGEK), and 117 to 152 (LTPEEVDDLLKGVKVGPDGMVKYEEFVRQITLPVPD).

This sequence belongs to the calmodulin family. As to quaternary structure, associates with the IMAC/intermicrovillar adhesion complex.

It is found in the cell projection. Its subcellular location is the microvillus. Its function is as follows. As part of the intermicrovillar adhesion complex/IMAC plays a role in epithelial brush border differentiation, controlling microvilli organization and length. Acts as a light chain for MYO7B and is required for efficient targeting of the IMAC to the tips of border brush microvilli. This chain is Calmodulin-like protein 4 (calml4), found in Xenopus tropicalis (Western clawed frog).